We begin with the raw amino-acid sequence, 239 residues long: Large ribosomal subunit protein uL1 (239 aa).

The protein belongs to the universal ribosomal protein uL1 family. Part of the 50S ribosomal subunit.

Functionally, binds directly to 23S rRNA. The L1 stalk is quite mobile in the ribosome, and is involved in E site tRNA release. In terms of biological role, protein L1 is also a translational repressor protein, it controls the translation of the L11 operon by binding to its mRNA. The chain is Large ribosomal subunit protein uL1 from Rhodococcus erythropolis (strain PR4 / NBRC 100887).